We begin with the raw amino-acid sequence, 272 residues long: Lyso-glycine lipid O-acyltransferase (272 aa).

It belongs to the O-acyltransferase GlsA family.

The enzyme catalyses a lyso-glycine lipid + a fatty acyl-[ACP] = a glycine lipid + holo-[ACP]. It catalyses the reaction N-[(3R)-3-hydroxyhexadecanoyl]-glycine + hexadecanoyl-[ACP] = N-[(3R)-3-(hexadecanoyloxy)hexadecanoyl]-glycine + holo-[ACP]. Its pathway is lipid metabolism. Functionally, is involved in the production of glycine lipids (GL), which are phosphorus-free membrane lipids important for fitness during growth of the human gut bacterium B.thetaiotaomicron in vivo and in vitro. Catalyzes the second step of GL biosynthesis, i.e. the O-acylation of the hydroxyl group of lyso-glycine lipids, resulting in the production of the mature diacylated glycine lipids. This Bacteroides thetaiotaomicron (strain ATCC 29148 / DSM 2079 / JCM 5827 / CCUG 10774 / NCTC 10582 / VPI-5482 / E50) protein is Lyso-glycine lipid O-acyltransferase.